A 1050-amino-acid polypeptide reads, in one-letter code: Elongation factor 3 (1050 aa).

2 residues coordinate ADP: Val-43 and His-45. An HEAT 1 repeat occupies 46–83 (DVPVEFFEDLKKQIQSKDAKVSLAALDAYKHIASTNGL). Ser-86 provides a ligand contact to ADP. HEAT repeat units follow at residues 89-126 (PYVV…AITP), 127-165 (TAVK…TAKA), 169-206 (LRMP…TIDN), 208-244 (DIEK…EVTM), 245-282 (ATLS…LVED), and 288-326 (PFMD…VGAV). Thr-395, His-399, and Glu-400 together coordinate ADP. 2 ABC transporter domains span residues 429–646 (DEGE…YYEL) and 672–998 (VKVS…KKDD). ADP-binding residues include Asn-708, Glu-927, Asn-930, and His-956. Positions 980–1050 (GHNWVQGQGS…DAYVSSDEEF (71 aa)) are disordered. The span at 1013–1037 (AAKKKKKLSSAELRKKKKERMKKKK) shows a compositional bias: basic residues.

This sequence belongs to the ABC transporter superfamily. ABCF family. EF3 subfamily. Monomer.

The protein localises to the cytoplasm. The enzyme catalyses ATP + H2O = ADP + phosphate + H(+). It functions in the pathway protein biosynthesis; polypeptide chain elongation. Ribosome-dependent ATPase that functions in cytoplasmic translation elongation. Required for the ATP-dependent release of deacylated tRNA from the ribosomal E-site during protein biosynthesis. Stimulates the eEF1A-dependent binding of aminoacyl-tRNA to the ribosomal A-site, which has reduced affinity for tRNA as long as the E-site is occupied. Assists translation termination by stimulating the release of nascent protein from the ribosome by release factors. This Candida albicans (strain SC5314 / ATCC MYA-2876) (Yeast) protein is Elongation factor 3 (CEF3).